The following is a 518-amino-acid chain: Glutamate--cysteine ligase (518 aa).

This sequence belongs to the glutamate--cysteine ligase type 1 family. Type 1 subfamily.

The enzyme catalyses L-cysteine + L-glutamate + ATP = gamma-L-glutamyl-L-cysteine + ADP + phosphate + H(+). It functions in the pathway sulfur metabolism; glutathione biosynthesis; glutathione from L-cysteine and L-glutamate: step 1/2. The chain is Glutamate--cysteine ligase from Salmonella arizonae (strain ATCC BAA-731 / CDC346-86 / RSK2980).